Here is a 372-residue protein sequence, read N- to C-terminus: Probable dual-specificity RNA methyltransferase RlmN (372 aa).

Glu106 functions as the Proton acceptor in the catalytic mechanism. The region spanning 112 to 359 (YPQRNTVCIS…SCTVRDTRGR (248 aa)) is the Radical SAM core domain. A disulfide bond links Cys119 and Cys365. The [4Fe-4S] cluster site is built by Cys126, Cys130, and Cys133. S-adenosyl-L-methionine-binding positions include 186–187 (GE), Ser220, 243–245 (SLH), and Asn322. Cys365 serves as the catalytic S-methylcysteine intermediate.

Belongs to the radical SAM superfamily. RlmN family. It depends on [4Fe-4S] cluster as a cofactor.

The protein resides in the cytoplasm. The catalysed reaction is adenosine(2503) in 23S rRNA + 2 reduced [2Fe-2S]-[ferredoxin] + 2 S-adenosyl-L-methionine = 2-methyladenosine(2503) in 23S rRNA + 5'-deoxyadenosine + L-methionine + 2 oxidized [2Fe-2S]-[ferredoxin] + S-adenosyl-L-homocysteine. The enzyme catalyses adenosine(37) in tRNA + 2 reduced [2Fe-2S]-[ferredoxin] + 2 S-adenosyl-L-methionine = 2-methyladenosine(37) in tRNA + 5'-deoxyadenosine + L-methionine + 2 oxidized [2Fe-2S]-[ferredoxin] + S-adenosyl-L-homocysteine. Its function is as follows. Specifically methylates position 2 of adenine 2503 in 23S rRNA and position 2 of adenine 37 in tRNAs. This chain is Probable dual-specificity RNA methyltransferase RlmN, found in Mycolicibacterium smegmatis (strain ATCC 700084 / mc(2)155) (Mycobacterium smegmatis).